Consider the following 348-residue polypeptide: Anthranilate phosphoribosyltransferase (348 aa).

5-phospho-alpha-D-ribose 1-diphosphate is bound by residues Gly87, 90–91 (GD), Thr95, 97–100 (NIST), 115–123 (KHGNRSASG), and Ser127. Gly87 is an anthranilate binding site. Ser99 serves as a coordination point for Mg(2+). Asn118 is an anthranilate binding site. Arg173 contributes to the anthranilate binding site. 2 residues coordinate Mg(2+): Asp232 and Glu233.

It belongs to the anthranilate phosphoribosyltransferase family. Homodimer. Mg(2+) is required as a cofactor.

It carries out the reaction N-(5-phospho-beta-D-ribosyl)anthranilate + diphosphate = 5-phospho-alpha-D-ribose 1-diphosphate + anthranilate. It participates in amino-acid biosynthesis; L-tryptophan biosynthesis; L-tryptophan from chorismate: step 2/5. Its function is as follows. Catalyzes the transfer of the phosphoribosyl group of 5-phosphorylribose-1-pyrophosphate (PRPP) to anthranilate to yield N-(5'-phosphoribosyl)-anthranilate (PRA). This is Anthranilate phosphoribosyltransferase from Synechococcus sp. (strain WH7803).